Consider the following 222-residue polypeptide: DnaJ homolog subfamily B member 9 (222 aa).

The first 23 residues, 1-23 (MATPQSVFVFAICILMITELILA), serve as a signal peptide directing secretion. The region spanning 26–90 (NYYDILGVPK…NRRKEYDIIG (65 aa)) is the J domain. The interval 91–222 (HSAFTNGKGQ…VTTYTDCSGQ (132 aa)) is divergent targeting domain. Residue Ser-133 is modified to Phosphoserine.

As to quaternary structure, interacts with HSPA5/BiP; interaction is direct. Interacts with ERN1/IRE1 (via the luminal region). Interacts with DERL1.

Its subcellular location is the endoplasmic reticulum lumen. Functionally, co-chaperone for Hsp70 protein HSPA5/BiP that acts as a key repressor of the ERN1/IRE1-mediated unfolded protein response (UPR). J domain-containing co-chaperones stimulate the ATPase activity of Hsp70 proteins and are required for efficient substrate recognition by Hsp70 proteins. In the unstressed endoplasmic reticulum, interacts with the luminal region of ERN1/IRE1 and selectively recruits HSPA5/BiP: HSPA5/BiP disrupts the dimerization of the active ERN1/IRE1 luminal region, thereby inactivating ERN1/IRE1. Also involved in endoplasmic reticulum-associated degradation (ERAD) of misfolded proteins. Required for survival of B-cell progenitors and normal antibody production. This is DnaJ homolog subfamily B member 9 from Rattus norvegicus (Rat).